We begin with the raw amino-acid sequence, 120 residues long: NAD(P)H-quinone oxidoreductase subunit 3, chloroplastic (120 aa).

Helical transmembrane passes span 9–29 (IFWAFLLISSVIPILAFLLSG), 64–84 (MFALVFVVFDVETVFLYPWAM), and 88–108 (VLGVSVFIEALIFVLILIVGL).

The protein belongs to the complex I subunit 3 family. NDH is composed of at least 16 different subunits, 5 of which are encoded in the nucleus.

It localises to the plastid. The protein localises to the chloroplast thylakoid membrane. It carries out the reaction a plastoquinone + NADH + (n+1) H(+)(in) = a plastoquinol + NAD(+) + n H(+)(out). The enzyme catalyses a plastoquinone + NADPH + (n+1) H(+)(in) = a plastoquinol + NADP(+) + n H(+)(out). Functionally, NDH shuttles electrons from NAD(P)H:plastoquinone, via FMN and iron-sulfur (Fe-S) centers, to quinones in the photosynthetic chain and possibly in a chloroplast respiratory chain. The immediate electron acceptor for the enzyme in this species is believed to be plastoquinone. Couples the redox reaction to proton translocation, and thus conserves the redox energy in a proton gradient. This is NAD(P)H-quinone oxidoreductase subunit 3, chloroplastic from Fagopyrum esculentum subsp. ancestrale (Wild buckwheat).